A 70-amino-acid polypeptide reads, in one-letter code: UPF0270 protein VV1_1320 (70 aa).

It belongs to the UPF0270 family.

The protein is UPF0270 protein VV1_1320 of Vibrio vulnificus (strain CMCP6).